A 174-amino-acid chain; its full sequence is ATP-dependent protease subunit HslV (174 aa).

T2 is an active-site residue. Residues G157, C160, and T163 each coordinate Na(+).

This sequence belongs to the peptidase T1B family. HslV subfamily. In terms of assembly, a double ring-shaped homohexamer of HslV is capped on each side by a ring-shaped HslU homohexamer. The assembly of the HslU/HslV complex is dependent on binding of ATP.

The protein resides in the cytoplasm. It catalyses the reaction ATP-dependent cleavage of peptide bonds with broad specificity.. Its activity is regulated as follows. Allosterically activated by HslU binding. In terms of biological role, protease subunit of a proteasome-like degradation complex believed to be a general protein degrading machinery. The polypeptide is ATP-dependent protease subunit HslV (Shewanella loihica (strain ATCC BAA-1088 / PV-4)).